We begin with the raw amino-acid sequence, 280 residues long: Tryptophan synthase alpha chain (280 aa).

Active-site proton acceptor residues include glutamate 49 and aspartate 60.

It belongs to the TrpA family. Tetramer of two alpha and two beta chains.

The catalysed reaction is (1S,2R)-1-C-(indol-3-yl)glycerol 3-phosphate + L-serine = D-glyceraldehyde 3-phosphate + L-tryptophan + H2O. Its pathway is amino-acid biosynthesis; L-tryptophan biosynthesis; L-tryptophan from chorismate: step 5/5. The alpha subunit is responsible for the aldol cleavage of indoleglycerol phosphate to indole and glyceraldehyde 3-phosphate. The sequence is that of Tryptophan synthase alpha chain from Corynebacterium efficiens (strain DSM 44549 / YS-314 / AJ 12310 / JCM 11189 / NBRC 100395).